The chain runs to 217 residues: 3,4-dihydroxy-2-butanone 4-phosphate synthase (217 aa).

D-ribulose 5-phosphate contacts are provided by residues 37-38, Asp-42, 150-154, and Glu-174; these read RE and RGGHT. Mg(2+) is bound at residue Glu-38. His-153 is a Mg(2+) binding site.

Belongs to the DHBP synthase family. Homodimer. It depends on Mg(2+) as a cofactor. The cofactor is Mn(2+).

The catalysed reaction is D-ribulose 5-phosphate = (2S)-2-hydroxy-3-oxobutyl phosphate + formate + H(+). It participates in cofactor biosynthesis; riboflavin biosynthesis; 2-hydroxy-3-oxobutyl phosphate from D-ribulose 5-phosphate: step 1/1. Catalyzes the conversion of D-ribulose 5-phosphate to formate and 3,4-dihydroxy-2-butanone 4-phosphate. The protein is 3,4-dihydroxy-2-butanone 4-phosphate synthase of Salmonella heidelberg (strain SL476).